The chain runs to 414 residues: Gamma-glutamyl phosphate reductase (414 aa).

The protein belongs to the gamma-glutamyl phosphate reductase family.

It localises to the cytoplasm. It catalyses the reaction L-glutamate 5-semialdehyde + phosphate + NADP(+) = L-glutamyl 5-phosphate + NADPH + H(+). It participates in amino-acid biosynthesis; L-proline biosynthesis; L-glutamate 5-semialdehyde from L-glutamate: step 2/2. Its function is as follows. Catalyzes the NADPH-dependent reduction of L-glutamate 5-phosphate into L-glutamate 5-semialdehyde and phosphate. The product spontaneously undergoes cyclization to form 1-pyrroline-5-carboxylate. This chain is Gamma-glutamyl phosphate reductase, found in Xanthomonas axonopodis pv. citri (strain 306).